The chain runs to 274 residues: Penicillin-insensitive murein endopeptidase (274 aa).

The signal sequence occupies residues 1 to 19; that stretch reads MNKTAIALLALLASSASLA. 3 cysteine pairs are disulfide-bonded: cysteine 44-cysteine 265, cysteine 187-cysteine 235, and cysteine 216-cysteine 223. Zn(2+) contacts are provided by histidine 110, histidine 113, aspartate 120, aspartate 147, histidine 150, and histidine 211. The disordered stretch occupies residues 228–274; the sequence is LPPSGDGCGAELQSWFEPPKPGTTKPEKKTPPPLPPSCQALLDEHVI.

Belongs to the peptidase M74 family. In terms of assembly, dimer. Zn(2+) is required as a cofactor.

The protein resides in the periplasm. With respect to regulation, inhibited by Zn(2+) at 10 mM and by metal chelating agents EDTA and 1,10-phenanthroline. Murein endopeptidase that cleaves the D-alanyl-meso-2,6-diamino-pimelyl amide bond that connects peptidoglycan strands. Likely plays a role in the removal of murein from the sacculus and could also play a role in the integration of nascent murein strands into the sacculus. The chain is Penicillin-insensitive murein endopeptidase (mepA) from Escherichia coli (strain K12).